We begin with the raw amino-acid sequence, 233 residues long: Probable dihydroorotate dehydrogenase B (NAD(+)), electron transfer subunit (233 aa).

The FAD-binding FR-type domain occupies Met1–Lys87. Positions 202, 207, 210, and 218 each coordinate [2Fe-2S] cluster.

It belongs to the PyrK family. In terms of assembly, heterotetramer of 2 PyrK and 2 PyrD type B subunits. [2Fe-2S] cluster is required as a cofactor. Requires FAD as cofactor.

The protein operates within pyrimidine metabolism; UMP biosynthesis via de novo pathway; orotate from (S)-dihydroorotate (NAD(+) route): step 1/1. Its function is as follows. Responsible for channeling the electrons from the oxidation of dihydroorotate from the FMN redox center in the PyrD type B subunit to the ultimate electron acceptor NAD(+). In Thermococcus kodakarensis (strain ATCC BAA-918 / JCM 12380 / KOD1) (Pyrococcus kodakaraensis (strain KOD1)), this protein is Probable dihydroorotate dehydrogenase B (NAD(+)), electron transfer subunit.